The chain runs to 440 residues: MTVQNPQEPEYFPEVFPQDAFPQYAWDEGMRPITLPHEVWLSETTHRDGQQGGLPLSLDTSRRIYDILCEITGDSTAIRHAEFFPYRDSDRNALIYALERHRDGAPIEPTTWIRARREDVELIKRIGVIETGLLSSSSDYHTFHKFGSGGRTQAASMYLDAVTMALDHGIRPRVHLEDTTRSSPDFVRALVEEVLKTAERYPAELQPRFRVCDTLGIGLPYDDVSLPRSIPRWIRLLRGFGLSPSQIELHPHNDTWLVVANCLAAIREGCGVISGTTLGTGERTGNAPLEAVMVHLLGMGYWSGARVNLPAVNKLVELYEGIGAGPSQKYPFFGRDAYVTRAGIHADGLNKFWWMYAPFNAPLLTGRELDVALTKDSGQAGLLFVLNKRLGLQLEKGDPRVAEVLAWMDRQWDAGRVSAVEWSELEPVVEKAFATEEGVG.

The 275-residue stretch at Val39–Asn313 folds into the Pyruvate carboxyltransferase domain.

This sequence belongs to the alpha-IPM synthase/homocitrate synthase family. Homodimer. Mn(2+) is required as a cofactor. The cofactor is Co(2+).

The catalysed reaction is 3-(hydrohydroxyphosphoryl)pyruvate + acetyl-CoA + H2O = phosphinomethylmalate + CoA + H(+). It participates in secondary metabolite biosynthesis; bialaphos biosynthesis. Its activity is regulated as follows. Strongly inhibited by p-chloromercuribenzoate (pCMB), iodoacetamide (IA) and EDTA. Its function is as follows. Involved in the biosynthesis of phosphinothricin tripeptide (PTT), also known as bialaphos (BA), a natural-product antibiotic and potent herbicide. Catalyzes the condensation berween phosphinopyruvic acid (PPA), an analog of oxalacetic acid, and acetyl-CoA to form R-2-phosphinomethylmalic acid (PMM). Can also act on oxaloacetate, but shows no activity when acetyl-CoA is substituted by propionyl-CoA or butyryl-CoA. This Streptomyces hygroscopicus protein is 2-phosphinomethylmalate synthase.